The sequence spans 160 residues: Inner membrane protein YcdZ (160 aa).

Transmembrane regions (helical) follow at residues 20-42 (WGAV…YFAC), 50-70 (LLIS…IIHG), 72-92 (ALAP…AFLM), 99-119 (LLLS…AGQG), and 123-143 (LVLP…NSGL).

To E.coli YahC.

Its subcellular location is the cell inner membrane. This chain is Inner membrane protein YcdZ (ycdZ), found in Salmonella typhimurium (strain LT2 / SGSC1412 / ATCC 700720).